The chain runs to 226 residues: PKHD-type hydroxylase PSPA7_5129 (226 aa).

The 101-residue stretch at Lys-78 to Ser-178 folds into the Fe2OG dioxygenase domain. Residues His-96, Asp-98, and His-159 each contribute to the Fe cation site. Arg-169 is a binding site for 2-oxoglutarate.

Requires Fe(2+) as cofactor. It depends on L-ascorbate as a cofactor.

This is PKHD-type hydroxylase PSPA7_5129 from Pseudomonas paraeruginosa (strain DSM 24068 / PA7) (Pseudomonas aeruginosa (strain PA7)).